Here is an 81-residue protein sequence, read N- to C-terminus: Cell division protein ZapB (81 aa).

Residues 5–81 (LEVFEKLESK…QALLGRMEEV (77 aa)) are a coiled coil. Residues 43–64 (VQSAQHGREELERENSQLKEQQ) form a disordered region. Residues 48-59 (HGREELERENSQ) show a composition bias toward basic and acidic residues.

It belongs to the ZapB family. In terms of assembly, homodimer. The ends of the coiled-coil dimer bind to each other, forming polymers. Interacts with FtsZ.

The protein localises to the cytoplasm. Functionally, non-essential, abundant cell division factor that is required for proper Z-ring formation. It is recruited early to the divisome by direct interaction with FtsZ, stimulating Z-ring assembly and thereby promoting cell division earlier in the cell cycle. Its recruitment to the Z-ring requires functional FtsA or ZipA. The polypeptide is Cell division protein ZapB (Klebsiella pneumoniae subsp. pneumoniae (strain ATCC 700721 / MGH 78578)).